The sequence spans 671 residues: DNA ligase (671 aa).

Residues 32–36, 81–82, and Glu-113 contribute to the NAD(+) site; these read DAEYD and SL. Lys-115 acts as the N6-AMP-lysine intermediate in catalysis. NAD(+)-binding residues include Arg-136, Glu-173, Lys-290, and Lys-314. Residues Cys-408, Cys-411, Cys-426, and Cys-432 each coordinate Zn(2+). The BRCT domain occupies 593 to 671; it reads EIDSPFAGKT…EAEMLRLLGS (79 aa).

This sequence belongs to the NAD-dependent DNA ligase family. LigA subfamily. Mg(2+) is required as a cofactor. Requires Mn(2+) as cofactor.

It catalyses the reaction NAD(+) + (deoxyribonucleotide)n-3'-hydroxyl + 5'-phospho-(deoxyribonucleotide)m = (deoxyribonucleotide)n+m + AMP + beta-nicotinamide D-nucleotide.. Functionally, DNA ligase that catalyzes the formation of phosphodiester linkages between 5'-phosphoryl and 3'-hydroxyl groups in double-stranded DNA using NAD as a coenzyme and as the energy source for the reaction. It is essential for DNA replication and repair of damaged DNA. The protein is DNA ligase of Shigella boydii serotype 4 (strain Sb227).